The chain runs to 359 residues: Phosphate acyltransferase (359 aa).

A disordered region spans residues 337–359; it reads AAGAAQPAPETEVPGAHPSPHVA.

This sequence belongs to the PlsX family. In terms of assembly, homodimer. Probably interacts with PlsY.

The protein localises to the cytoplasm. The catalysed reaction is a fatty acyl-[ACP] + phosphate = an acyl phosphate + holo-[ACP]. It participates in lipid metabolism; phospholipid metabolism. Functionally, catalyzes the reversible formation of acyl-phosphate (acyl-PO(4)) from acyl-[acyl-carrier-protein] (acyl-ACP). This enzyme utilizes acyl-ACP as fatty acyl donor, but not acyl-CoA. The polypeptide is Phosphate acyltransferase (Cupriavidus necator (strain ATCC 17699 / DSM 428 / KCTC 22496 / NCIMB 10442 / H16 / Stanier 337) (Ralstonia eutropha)).